The following is a 331-amino-acid chain: Protein PER1 homolog (331 aa).

A signal peptide spans 1–24 (MRVLRNFTIFFLFTALSLFRQISA). Residues 25-100 (SAGDLHPVYV…QYHGKWYFIR (76 aa)) are Lumenal-facing. A helical membrane pass occupies residues 101–121 (VFGIQELFSVFFSMLNFMIHY). Residues 122–139 (NGYHIMRRCIPDEHPAKR) are Cytoplasmic-facing. The chain crosses the membrane as a helical span at residues 140–160 (LCLSWAIVGMNAWVWSSVFHI). Residues 161–168 (RDTPITEK) lie on the Lumenal side of the membrane. A helical membrane pass occupies residues 169–189 (LDYFSAGAFVLFGSYCTLILM). Residues 190 to 199 (LRLDQLPGGK) are Cytoplasmic-facing. Residues 200–220 (LLCWIIGVIFIAAFIAHVSYL) traverse the membrane as a helical segment. At 221–232 (SFYSFDYGYNMK) the chain is on the lumenal side. Residues 233 to 250 (ANVAVGLVQNILWYYYSW) form a helical membrane-spanning segment. At 251 to 263 (SNRNSGLYWTRWP) the chain is on the cytoplasmic side. Residues 264-284 (AYIVTSLMLATSLELFDFSPI) traverse the membrane as a helical segment. At 285 to 289 (ANLID) the chain is on the lumenal side. The chain crosses the membrane as a helical span at residues 290–310 (AHALWHLSTVPITHYLYGFVV). Residues 311 to 331 (RKCSYDLTKGTFKIKAYDSSR) lie on the Cytoplasmic side of the membrane.

Belongs to the PGAP3/PER1 family.

The protein resides in the endoplasmic reticulum membrane. It localises to the vacuole membrane. Involved in the lipid remodeling steps of GPI-anchor maturation. Lipid remodeling steps consist in the generation of 2 saturated fatty chains at the sn-2 position of GPI-anchors proteins. Required for phospholipase A2 activity that removes an acyl-chain at the sn-2 position of GPI-anchors during the remodeling of GPI. Required for efficient transport of GPI-anchor proteins. The chain is Protein PER1 homolog from Schizosaccharomyces pombe (strain 972 / ATCC 24843) (Fission yeast).